Here is a 394-residue protein sequence, read N- to C-terminus: ATP phosphoribosyltransferase regulatory subunit (394 aa).

It belongs to the class-II aminoacyl-tRNA synthetase family. HisZ subfamily. In terms of assembly, heteromultimer composed of HisG and HisZ subunits.

It is found in the cytoplasm. The protein operates within amino-acid biosynthesis; L-histidine biosynthesis; L-histidine from 5-phospho-alpha-D-ribose 1-diphosphate: step 1/9. In terms of biological role, required for the first step of histidine biosynthesis. May allow the feedback regulation of ATP phosphoribosyltransferase activity by histidine. This chain is ATP phosphoribosyltransferase regulatory subunit, found in Pseudomonas paraeruginosa (strain DSM 24068 / PA7) (Pseudomonas aeruginosa (strain PA7)).